Consider the following 468-residue polypeptide: Argininosuccinate lyase (468 aa).

It belongs to the lyase 1 family. Argininosuccinate lyase subfamily.

It is found in the cytoplasm. The enzyme catalyses 2-(N(omega)-L-arginino)succinate = fumarate + L-arginine. It participates in amino-acid biosynthesis; L-arginine biosynthesis; L-arginine from L-ornithine and carbamoyl phosphate: step 3/3. In Methanothermobacter thermautotrophicus (strain ATCC 29096 / DSM 1053 / JCM 10044 / NBRC 100330 / Delta H) (Methanobacterium thermoautotrophicum), this protein is Argininosuccinate lyase.